Here is a 238-residue protein sequence, read N- to C-terminus: uncharacterized protein (238 aa).

Over residues 1 to 10 (MARGQNIRKR) the composition is skewed to basic residues. Disordered regions lie at residues 1 to 26 (MARGQNIRKRTFSDMDTPSDKNIGIH) and 195 to 238 (LNTS…YDSF).

It belongs to the asfivirus DP238L family.

This is an uncharacterized protein from Ornithodoros (relapsing fever ticks).